Here is a 90-residue protein sequence, read N- to C-terminus: U7-theraphotoxin-Hhn1l (90 aa).

The first 19 residues, 1–19, serve as a signal peptide directing secretion; that stretch reads MKTAIFTVVLALAVFAVLS. The propeptide occupies 20–50; sequence FGWEANEKALSEEFTELIHEKEAASETEARE. Cystine bridges form between cysteine 51–cysteine 65, cysteine 58–cysteine 70, and cysteine 64–cysteine 81.

This sequence belongs to the neurotoxin 10 (Hwtx-1) family. 13 (Hntx-13) subfamily. In terms of tissue distribution, expressed by the venom gland.

The protein resides in the secreted. Functionally, ion channel inhibitor. In Cyriopagopus hainanus (Chinese bird spider), this protein is U7-theraphotoxin-Hhn1l.